Here is a 463-residue protein sequence, read N- to C-terminus: Cytidylate cyclase (463 aa).

One can recognise a Guanylate cyclase domain in the interval 122–231 (VTMFMDIIGS…IGIRIGIDLG (110 aa)). Phe-125 is an a ribonucleoside 5'-triphosphate binding site. Residues Asp-127, Ile-128, and Asp-171 each contribute to the Mn(2+) site. Residues 334–454 (KPSRIKVVIS…VISNDTVIER (121 aa)) form an AGS-C domain region.

It belongs to the adenylyl cyclase class-4/guanylyl cyclase family. Pyrimidine cyclase subfamily. As to quaternary structure, homodimer. Requires Mn(2+) as cofactor.

It is found in the cytoplasm. It catalyses the reaction CTP = 3',5'-cyclic CMP + diphosphate. Functionally, pycsar (pyrimidine cyclase system for antiphage resistance) provides immunity against bacteriophage. The pyrimidine cyclase (PycC) synthesizes cyclic nucleotides in response to infection; these serve as specific second messenger signals. The signal activates the adjacent effector, leading to bacterial cell death and abortive phage infection. A clade E Pycsar system. The pyrimidine cyclase gene of a two-gene Pycsar system, generates cyclic CMP (cCMP) from CTP in response to bacteriophage infection. Has little to no activity on ATP, GTP or UTP. Expression of this and adjacent effector Ec303145PycTM (AC P0DV27) confers resistance to bacteriophage P1, T5, lambda-vir and phi27. The protein is Cytidylate cyclase of Escherichia coli.